Reading from the N-terminus, the 137-residue chain is Small ribosomal subunit protein uS12 (137 aa).

Positions 1–57 (MPTINQLIRKGRKSKGSKSNSPALNFGYNSYKKVQTNNSAPQKRGVATRVGTMTPKK) are disordered. Positions 32–41 (KKVQTNNSAP) are enriched in polar residues. Residue aspartate 102 is modified to 3-methylthioaspartic acid.

This sequence belongs to the universal ribosomal protein uS12 family. Part of the 30S ribosomal subunit. Contacts proteins S8 and S17. May interact with IF1 in the 30S initiation complex.

Functionally, with S4 and S5 plays an important role in translational accuracy. In terms of biological role, interacts with and stabilizes bases of the 16S rRNA that are involved in tRNA selection in the A site and with the mRNA backbone. Located at the interface of the 30S and 50S subunits, it traverses the body of the 30S subunit contacting proteins on the other side and probably holding the rRNA structure together. The combined cluster of proteins S8, S12 and S17 appears to hold together the shoulder and platform of the 30S subunit. In Ligilactobacillus salivarius (strain UCC118) (Lactobacillus salivarius), this protein is Small ribosomal subunit protein uS12.